Reading from the N-terminus, the 393-residue chain is Formate-dependent phosphoribosylglycinamide formyltransferase (393 aa).

N(1)-(5-phospho-beta-D-ribosyl)glycinamide contacts are provided by residues 22–23 (EL) and Glu82. Residues Arg114, Lys155, 160 to 165 (SSGKGQ), 195 to 198 (EGFI), and Glu203 each bind ATP. The 190-residue stretch at 119–308 (RLAAEELDLP…QFALHARAIL (190 aa)) folds into the ATP-grasp domain. Residues Glu267 and Glu279 each coordinate Mg(2+). Residues Asp286, Lys356, and 363 to 364 (RR) contribute to the N(1)-(5-phospho-beta-D-ribosyl)glycinamide site.

The protein belongs to the PurK/PurT family. Homodimer.

The enzyme catalyses N(1)-(5-phospho-beta-D-ribosyl)glycinamide + formate + ATP = N(2)-formyl-N(1)-(5-phospho-beta-D-ribosyl)glycinamide + ADP + phosphate + H(+). The protein operates within purine metabolism; IMP biosynthesis via de novo pathway; N(2)-formyl-N(1)-(5-phospho-D-ribosyl)glycinamide from N(1)-(5-phospho-D-ribosyl)glycinamide (formate route): step 1/1. In terms of biological role, involved in the de novo purine biosynthesis. Catalyzes the transfer of formate to 5-phospho-ribosyl-glycinamide (GAR), producing 5-phospho-ribosyl-N-formylglycinamide (FGAR). Formate is provided by PurU via hydrolysis of 10-formyl-tetrahydrofolate. This Pseudomonas entomophila (strain L48) protein is Formate-dependent phosphoribosylglycinamide formyltransferase.